We begin with the raw amino-acid sequence, 197 residues long: Gastrula zinc finger protein XlCGF17.1 (197 aa).

C2H2-type zinc fingers lie at residues 6-28, 34-56, 62-84, 90-112, 118-140, 146-169, and 175-197; these read ISCS…QMTH, YSCS…QKIH, FSCS…HRTH, FFCS…RRTH, FSCS…YRTH, FSCS…RRSH, and FSCS…LRTH.

The protein belongs to the krueppel C2H2-type zinc-finger protein family.

It is found in the nucleus. May be involved in transcriptional regulation. The protein is Gastrula zinc finger protein XlCGF17.1 of Xenopus laevis (African clawed frog).